Here is an 825-residue protein sequence, read N- to C-terminus: BEN domain-containing protein 3 (825 aa).

Positions 1–11 are enriched in acidic residues; the sequence is MNSTEISEDVE. The disordered stretch occupies residues 1–35; it reads MNSTEISEDVEEVLKNNPVKAEGSDATLDCSRNSR. Lys-20 participates in a covalent cross-link: Glycyl lysine isopeptide (Lys-Gly) (interchain with G-Cter in SUMO); alternate. Lys-20 participates in a covalent cross-link: Glycyl lysine isopeptide (Lys-Gly) (interchain with G-Cter in SUMO1); alternate. A Glycyl lysine isopeptide (Lys-Gly) (interchain with G-Cter in SUMO2); alternate cross-link involves residue Lys-20. Glycyl lysine isopeptide (Lys-Gly) (interchain with G-Cter in SUMO2) cross-links involve residues Lys-39, Lys-54, Lys-56, Lys-71, Lys-126, Lys-127, Lys-135, Lys-140, Lys-156, and Lys-174. Residues 52–122 form a disordered region; the sequence is SSKRKQLDSD…EEEPSTEATV (71 aa). Residues 54-56 carry the Nuclear localization signal motif; it reads KRK. In terms of domain architecture, BEN 1 spans 239 to 340; the sequence is PPPEYQLTAS…DFFSRFWAQR (102 aa). Position 376 is a phosphoserine (Ser-376). A BEN 2 domain is found at 384-484; the sequence is ASDHVVDTQD…DELEGLGLEG (101 aa). A Glycyl lysine isopeptide (Lys-Gly) (interchain with G-Cter in SUMO2) cross-link involves residue Lys-424. Ser-486 carries the phosphoserine modification. Residue Lys-509 forms a Glycyl lysine isopeptide (Lys-Gly) (interchain with G-Cter in SUMO); alternate linkage. A Glycyl lysine isopeptide (Lys-Gly) (interchain with G-Cter in SUMO2); alternate cross-link involves residue Lys-509. A Glycyl lysine isopeptide (Lys-Gly) (interchain with G-Cter in SUMO2) cross-link involves residue Lys-525. In terms of domain architecture, BEN 3 spans 547-647; it reads GSDCLLSKEQ…ERCRRRDTEQ (101 aa). A Glycyl lysine isopeptide (Lys-Gly) (interchain with G-Cter in SUMO2) cross-link involves residue Lys-697. Residues 712 to 813 form the BEN 4 domain; it reads VPSPYLLSDK…ERCRRPNRKK (102 aa).

In terms of assembly, homooligomer, probably a homooctamer. Interacts with HDAC2 and HDAC3, but not HDAC1. Interacts with SALL4. Interacts with SMARCA5/SNF2H, BAZ2A/TIP5 and USP21. Interacts with the nucleosome remodeling and histone deacetylase (NuRD) repressor complex. Interacts (via BEN domains 1 and 3) with ERCC6L (via N-terminal TPR repeat); the interaction is direct. In terms of processing, sumoylated at Lys-20 by SUMO1 and at Lys-509 by SUMO1, SUMO2 and SUMO3. Sumoylation probably occurs sequentially, with that of Lys-20 preceding that of Lys-509. It does not alter association with heterochromatin, but is required for the repression of transcription.

The protein localises to the nucleus. It is found in the nucleolus. Transcriptional repressor which associates with the NoRC (nucleolar remodeling complex) complex and plays a key role in repressing rDNA transcription. The sumoylated form modulates the stability of the NoRC complex component BAZ2A/TIP5 by controlling its USP21-mediated deubiquitination. Binds to unmethylated major satellite DNA and is involved in the recruitment of the Polycomb repressive complex 2 (PRC2) to major satellites. Stimulates the ERCC6L translocase and ATPase activities. This chain is BEN domain-containing protein 3 (Bend3), found in Mus musculus (Mouse).